We begin with the raw amino-acid sequence, 198 residues long: Charged multivesicular body protein 2a homolog 2 (198 aa).

A coiled-coil region spans residues 11 to 42 (KEVLRENQRNLNKSMREIDRERVALQNQEKKI).

The protein belongs to the SNF7 family. Probable core component of the endosomal sorting required for transport complex III (ESCRT-III). ESCRT-III components are thought to multimerize to form a flat lattice on the perimeter membrane of the endosome.

It is found in the endosome membrane. Functionally, probable core component of the endosomal sorting required for transport complex III (ESCRT-III) which is involved in multivesicular bodies (MVBs) formation and sorting of endosomal cargo proteins into MVBs. MVBs contain intraluminal vesicles (ILVs) that are generated by invagination and scission from the limiting membrane of the endosome and are delivered to lysosomes enabling degradation of membrane proteins. The chain is Charged multivesicular body protein 2a homolog 2 (chmp2a2) from Dictyostelium discoideum (Social amoeba).